Reading from the N-terminus, the 213-residue chain is Uridine kinase (213 aa).

An ATP-binding site is contributed by 15–22 (GASASGKS).

Belongs to the uridine kinase family.

The protein resides in the cytoplasm. The enzyme catalyses uridine + ATP = UMP + ADP + H(+). It carries out the reaction cytidine + ATP = CMP + ADP + H(+). The protein operates within pyrimidine metabolism; CTP biosynthesis via salvage pathway; CTP from cytidine: step 1/3. It functions in the pathway pyrimidine metabolism; UMP biosynthesis via salvage pathway; UMP from uridine: step 1/1. This chain is Uridine kinase, found in Pectobacterium atrosepticum (strain SCRI 1043 / ATCC BAA-672) (Erwinia carotovora subsp. atroseptica).